An 89-amino-acid polypeptide reads, in one-letter code: Large ribosomal subunit protein bL27 (89 aa).

Positions M1–R20 are disordered.

It belongs to the bacterial ribosomal protein bL27 family.

This chain is Large ribosomal subunit protein bL27, found in Ruegeria pomeroyi (strain ATCC 700808 / DSM 15171 / DSS-3) (Silicibacter pomeroyi).